Consider the following 489-residue polypeptide: Homoserine O-acetyltransferase (489 aa).

In terms of domain architecture, AB hydrolase-1 spans 63–435 (NALVICHALS…SPEGHDAFLL (373 aa)). The active site involves Ser-162. Residue Ser-162 is the Nucleophile of the active site. Residues 247–272 (RFGRNVPDPSKRQNINGTERLPTPPN) form a disordered region. Active-site residues include Asp-401 and His-430.

It belongs to the AB hydrolase superfamily. MetX family.

It carries out the reaction L-homoserine + acetyl-CoA = O-acetyl-L-homoserine + CoA. It functions in the pathway amino-acid biosynthesis; L-methionine biosynthesis via de novo pathway; O-acetyl-L-homoserine from L-homoserine: step 1/1. Commits homoserine to the methionine biosynthesis pathway by catalyzing its O-acetylation. In Emericella nidulans (strain FGSC A4 / ATCC 38163 / CBS 112.46 / NRRL 194 / M139) (Aspergillus nidulans), this protein is Homoserine O-acetyltransferase (metE).